The chain runs to 251 residues: Hydroxyacylglutathione hydrolase (251 aa).

Residues His53, His55, Asp57, His58, His110, Asp127, and His165 each coordinate Zn(2+).

Belongs to the metallo-beta-lactamase superfamily. Glyoxalase II family. As to quaternary structure, monomer. Requires Zn(2+) as cofactor.

It carries out the reaction an S-(2-hydroxyacyl)glutathione + H2O = a 2-hydroxy carboxylate + glutathione + H(+). The protein operates within secondary metabolite metabolism; methylglyoxal degradation; (R)-lactate from methylglyoxal: step 2/2. Its function is as follows. Thiolesterase that catalyzes the hydrolysis of S-D-lactoyl-glutathione to form glutathione and D-lactic acid. This Salmonella arizonae (strain ATCC BAA-731 / CDC346-86 / RSK2980) protein is Hydroxyacylglutathione hydrolase.